The primary structure comprises 497 residues: POU domain, class 3, transcription factor 3 (497 aa).

A compositionally biased stretch (gly residues) spans 31 to 51 (GGGGGGGGGGGGAGGGGGGMQ). Disordered regions lie at residues 31-62 (GGGGGGGGGGGGAGGGGGGMQPGSAAVTSGAY), 121-189 (WSGS…WGAA), 230-316 (NGML…TPTS), and 458-497 (EKRMTPPGIQQQTPDDVYSQVGTVSADTPPPHHGLQTSVQ). Pro residues-rich tracts occupy residues 133 to 145 (QQPPRPPPPPPQG) and 170 to 180 (HLGPPPPPPHQ). The segment covering 240–250 (GGGGGGAGGGA) has biased composition (gly residues). A compositionally biased stretch (basic residues) spans 269–286 (HHHHHHHHAHPHPPHPHH). A POU-specific domain is found at 311-385 (EDTPTSDDLE…LLNKWLEEAD (75 aa)). The segment at residues 403–462 (KRKKRTSIEVSVKGALESHFLKCPKPSAQEITNLADSLQLEKEVVRVWFCNRRQKEKRMT) is a DNA-binding region (homeobox). The span at 465–483 (GIQQQTPDDVYSQVGTVSA) shows a compositional bias: polar residues.

The protein belongs to the POU transcription factor family. Class-3 subfamily. In terms of assembly, homodimer. In terms of tissue distribution, brain.

It is found in the nucleus. Transcription factor that acts synergistically with SOX11 and SOX4. Plays a role in neuronal development. Is implicated in an enhancer activity at the embryonic met-mesencephalic junction; the enhancer element contains the octamer motif (5'-ATTTGCAT-3'). This Rattus norvegicus (Rat) protein is POU domain, class 3, transcription factor 3 (Pou3f3).